Consider the following 766-residue polypeptide: MEEIKPASASCVSKEKPSKVSDLISRFEGGSSLSNYSDLKKESAVNLNAPRTPGRHGLTTTPQQKLLSQHLPQRQGNDTDKTQGAQTCVANGVMAAQNQMECEEEKAATLSSDTSIQASEPLLDTHIVNGERDETATAPASPTTDSCDGNASDSSYRTPGIGPVLPLEERGAETETKVQERENGESPLELEQLDQHHEMKETNEQKLHKIANELLLTERAYVNRLDLLDQVFYCKLLEEANRGSFPAEMVNKIFSNISSINAFHSKFLLPELEKRMQEWETTPRIGDILQKLAPFLKMYGEYVKGFDNAMELVKNMTERIPQFKSVVEEIQKQKICGSLTLQHHMLEPVQRIPRYEMLLKDYLRKLPPDSLDWNDAKKSLEIISTAASHSNSAIRKMENLKKLLEIYEMLGEEEDIVNPSNELIKEGQILKLAARNTSAQERYLFLFNNMLLYCVPKFSLVGSKFTVRTRVGIDGMKIVETQNEEYPHTFQVSGKERTLELQASSAQDKEEWIKALQETIDAFHQRHETFRNAIAKDNDIHSEVSTAELGKRAPRWIRDNEVTMCMKCKEPFNALTRRRHHCRACGYVVCWKCSDYKAQLEYDGGKLSKVCKDCYQIISGFTDSEEKKRKGILEIESAEVSGNSVVCSFLQYMEKSKPWQKAWCVIPKQDPLVLYMYGAPQDVRAQATIPLLGYVVDEMPRSADLPHSFKLTQSKSVHSFAADSEELKQKWLKVILLAVTGETPGGPNEHPATLDDHPEPKKKSEC.

Disordered regions lie at residues 1–20, 46–83, and 134–188; these read MEEI…PSKV, NLNA…DKTQ, and ETAT…ESPL. Positions 1-150 are actin filament-binding; sequence MEEIKPASAS…SPTTDSCDGN (150 aa). 2 stretches are compositionally biased toward polar residues: residues 58–83 and 145–157; these read LTTT…DKTQ and DSCD…SSYR. Residues 167 to 184 show a composition bias toward basic and acidic residues; it reads LEERGAETETKVQERENG. In terms of domain architecture, DH spans 206-393; that stretch reads KLHKIANELL…STAASHSNSA (188 aa). The PH 1 domain occupies 422–521; that stretch reads ELIKEGQILK…WIKALQETID (100 aa). The FYVE-type zinc finger occupies 559 to 619; it reads DNEVTMCMKC…VCKDCYQIIS (61 aa). Residues Cys-565, Cys-568, Cys-582, Cys-585, Cys-590, Cys-593, Cys-611, and Cys-614 each contribute to the Zn(2+) site. The 98-residue stretch at 643 to 740 folds into the PH 2 domain; it reads NSVVCSFLQY…WLKVILLAVT (98 aa). 2 positions are modified to phosphoserine: Ser-702 and Ser-716. Residues 742–766 form a disordered region; it reads ETPGGPNEHPATLDDHPEPKKKSEC. Positions 752 to 766 are enriched in basic and acidic residues; the sequence is ATLDDHPEPKKKSEC.

As to quaternary structure, homooligomer. In terms of tissue distribution, expressed in different tissues, including brain, cerebellum, peripheral nerve, skeletal muscle, heart, uterus, placenta and testis.

It is found in the cytoplasm. The protein resides in the cytoskeleton. The protein localises to the cell projection. It localises to the filopodium. Activates CDC42, a member of the Ras-like family of Rho- and Rac proteins, by exchanging bound GDP for free GTP. Plays a role in regulating the actin cytoskeleton and cell shape. Activates MAPK8. The protein is FYVE, RhoGEF and PH domain-containing protein 4 (FGD4) of Homo sapiens (Human).